A 630-amino-acid polypeptide reads, in one-letter code: tRNA uridine 5-carboxymethylaminomethyl modification enzyme MnmG (630 aa).

13 to 18 contacts FAD; the sequence is GGGHAG. 273-287 contacts NAD(+); sequence GPRYCPSIEDKIHRF.

It belongs to the MnmG family. Homodimer. Heterotetramer of two MnmE and two MnmG subunits. FAD serves as cofactor.

The protein resides in the cytoplasm. NAD-binding protein involved in the addition of a carboxymethylaminomethyl (cmnm) group at the wobble position (U34) of certain tRNAs, forming tRNA-cmnm(5)s(2)U34. This chain is tRNA uridine 5-carboxymethylaminomethyl modification enzyme MnmG, found in Pseudomonas putida (Arthrobacter siderocapsulatus).